The primary structure comprises 183 residues: ATP synthase subunit delta (183 aa).

The protein belongs to the ATPase delta chain family. As to quaternary structure, F-type ATPases have 2 components, F(1) - the catalytic core - and F(0) - the membrane proton channel. F(1) has five subunits: alpha(3), beta(3), gamma(1), delta(1), epsilon(1). F(0) has three main subunits: a(1), b(2) and c(10-14). The alpha and beta chains form an alternating ring which encloses part of the gamma chain. F(1) is attached to F(0) by a central stalk formed by the gamma and epsilon chains, while a peripheral stalk is formed by the delta and b chains.

It localises to the cell inner membrane. F(1)F(0) ATP synthase produces ATP from ADP in the presence of a proton or sodium gradient. F-type ATPases consist of two structural domains, F(1) containing the extramembraneous catalytic core and F(0) containing the membrane proton channel, linked together by a central stalk and a peripheral stalk. During catalysis, ATP synthesis in the catalytic domain of F(1) is coupled via a rotary mechanism of the central stalk subunits to proton translocation. In terms of biological role, this protein is part of the stalk that links CF(0) to CF(1). It either transmits conformational changes from CF(0) to CF(1) or is implicated in proton conduction. In Desulfosudis oleivorans (strain DSM 6200 / JCM 39069 / Hxd3) (Desulfococcus oleovorans), this protein is ATP synthase subunit delta.